Consider the following 168-residue polypeptide: Endoribonuclease YbeY (168 aa).

3 residues coordinate Zn(2+): H127, H131, and H137.

This sequence belongs to the endoribonuclease YbeY family. Requires Zn(2+) as cofactor.

It localises to the cytoplasm. Single strand-specific metallo-endoribonuclease involved in late-stage 70S ribosome quality control and in maturation of the 3' terminus of the 16S rRNA. This is Endoribonuclease YbeY from Chromobacterium violaceum (strain ATCC 12472 / DSM 30191 / JCM 1249 / CCUG 213 / NBRC 12614 / NCIMB 9131 / NCTC 9757 / MK).